Reading from the N-terminus, the 347-residue chain is BSD domain-containing protein C22A12.14c (347 aa).

Thr123 and Thr125 each carry phosphothreonine. The BSD domain occupies 167 to 219 (WEKEISIDGKTEEISLLLEEYPDLRKQMESLVPSEVSYDDFWKRFFWHKEVVQ). The interval 229 to 347 (DEEEIFSWGD…DDDEDDDDWE (119 aa)) is disordered. Ser235, Ser241, and Ser246 each carry phosphoserine. Acidic residues predominate over residues 240–251 (RSDEEESDNEQV). Positions 297 to 312 (HDGEVDGEVKEEEENK) are enriched in basic and acidic residues. A compositionally biased stretch (low complexity) spans 313–325 (VSSSSNIEASQSS). Residues 327 to 337 (EVKDEANRKVD) are compositionally biased toward basic and acidic residues. Residues 338–347 (DDDEDDDDWE) are compositionally biased toward acidic residues.

It is found in the cytoplasm. This chain is BSD domain-containing protein C22A12.14c, found in Schizosaccharomyces pombe (strain 972 / ATCC 24843) (Fission yeast).